A 143-amino-acid polypeptide reads, in one-letter code: Putative transmembrane protein ORF32 (143 aa).

2 helical membrane passes run 20 to 42 and 52 to 74; these read GISGMLRLAMLGLTGVSTMSFTL and WPLIGAMCVGTLLFAYYYTEGGV.

It localises to the host membrane. The polypeptide is Putative transmembrane protein ORF32 (Haloarcula hispanica (His1V)).